The following is a 150-amino-acid chain: Small ribosomal subunit protein uS19y (150 aa).

The protein belongs to the universal ribosomal protein uS19 family.

It localises to the cytoplasm. This chain is Small ribosomal subunit protein uS19y (RPS15C), found in Arabidopsis thaliana (Mouse-ear cress).